The primary structure comprises 627 residues: MRRPKKYESGEATQYISRRAALRKLQLSLNDFRRLCILKGVYPREPKHRRRAQKGSSEIKVLYHTKDIRFLLHESIVWTLRDYKIFAKKSNRDRAIKDFRNLKRRLALFPEIKLDHIVKERYPTFIDALKDLDDCLTLLFLFSTFPSLHLIPREQSNLCRRLTIEFLHYVIASKSLRKVFISIKGYYFQAEIKGQKVTWIVPHYYPFKPQSRQEVDFKVMSIFVEFYTIMLGFTNFRLFHGLNLAYPPQFPSSVLQDSEESLKDEASFVSDRIAALNFELLRTDKVQEDEEELDIDMELLEQDGDSKRIIKMKQEAQEVSRLRTLFKGLKFFINREVPREPLVILIRSFGGKVSWDSSIFAGSTYDEGDETITHQIVDRPSISTQYISRDYIQPQWVFDCVNQRQLLPTNKYFIGETLPPHLSPFVDSKRDSYIPPEEKALLDPSLIETHVQSDDDSEDEAQEEEETVDQELLDAQLQLAYQQETAEYKKFGGPDGVNEDEEDPEDDDDNEDDDEEEEELDEKTKRLQEEKQKMSVQSGKVHKVNKRQVHKAEVDEHRLQARMVKPRHRNLFRKLIREKQSKEKEEWLLRKKRRTIEASEKEARKTAKREARKEAAAAAAKASKLGK.

The 94-residue stretch at 321–414 (RLRTLFKGLK…QLLPTNKYFI (94 aa)) folds into the BRCT domain. Disordered stretches follow at residues 450-469 (HVQS…ETVD), 488-562 (YKKF…LQAR), and 595-627 (TIEA…KLGK). Phosphoserine occurs at positions 453 and 457. Composition is skewed to acidic residues over residues 454-469 (DDDS…ETVD) and 497-521 (VNED…EELD). A coiled-coil region spans residues 507-538 (DDDNEDDDEEEEELDEKTKRLQEEKQKMSVQS). A compositionally biased stretch (basic and acidic residues) spans 522–533 (EKTKRLQEEKQK). Positions 540-549 (KVHKVNKRQV) are enriched in basic residues. Basic and acidic residues-rich tracts occupy residues 550 to 559 (HKAEVDEHRL) and 595 to 615 (TIEA…RKEA). Residues 582–625 (KEKEEWLLRKKRRTIEASEKEARKTAKREARKEAAAAAAKASKL) adopt a coiled-coil conformation. The span at 616 to 627 (AAAAAKASKLGK) shows a compositional bias: low complexity.

The protein belongs to the pescadillo family.

The protein localises to the nucleus. Its subcellular location is the nucleolus. The protein resides in the nucleoplasm. Its function is as follows. Required for maturation of ribosomal RNAs and formation of the large ribosomal subunit. The chain is Pescadillo homolog from Drosophila sechellia (Fruit fly).